The following is a 273-amino-acid chain: Dermonecrotic toxin LhSicTox-alphaIA1ii (273 aa).

The active site involves His-5. Mg(2+)-binding residues include Glu-25 and Asp-27. The Nucleophile role is filled by His-41. Disulfide bonds link Cys-45-Cys-51 and Cys-47-Cys-190. Residue Asp-85 coordinates Mg(2+).

It belongs to the arthropod phospholipase D family. Class II subfamily. Requires Mg(2+) as cofactor. In terms of tissue distribution, expressed by the venom gland.

The protein resides in the secreted. The catalysed reaction is an N-(acyl)-sphingosylphosphocholine = an N-(acyl)-sphingosyl-1,3-cyclic phosphate + choline. The enzyme catalyses an N-(acyl)-sphingosylphosphoethanolamine = an N-(acyl)-sphingosyl-1,3-cyclic phosphate + ethanolamine. It catalyses the reaction a 1-acyl-sn-glycero-3-phosphocholine = a 1-acyl-sn-glycero-2,3-cyclic phosphate + choline. It carries out the reaction a 1-acyl-sn-glycero-3-phosphoethanolamine = a 1-acyl-sn-glycero-2,3-cyclic phosphate + ethanolamine. Its function is as follows. Dermonecrotic toxins cleave the phosphodiester linkage between the phosphate and headgroup of certain phospholipids (sphingolipid and lysolipid substrates), forming an alcohol (often choline) and a cyclic phosphate. This toxin acts on sphingomyelin (SM). It may also act on ceramide phosphoethanolamine (CPE), lysophosphatidylcholine (LPC) and lysophosphatidylethanolamine (LPE), but not on lysophosphatidylserine (LPS), and lysophosphatidylglycerol (LPG). It acts by transphosphatidylation, releasing exclusively cyclic phosphate products as second products. Induces dermonecrosis, hemolysis, increased vascular permeability, edema, inflammatory response, and platelet aggregation. The chain is Dermonecrotic toxin LhSicTox-alphaIA1ii from Loxosceles hirsuta (Recluse spider).